The chain runs to 210 residues: Uridine kinase (210 aa).

12-19 contributes to the ATP binding site; the sequence is GGSGSGKT.

This sequence belongs to the uridine kinase family.

The protein localises to the cytoplasm. The enzyme catalyses uridine + ATP = UMP + ADP + H(+). The catalysed reaction is cytidine + ATP = CMP + ADP + H(+). The protein operates within pyrimidine metabolism; CTP biosynthesis via salvage pathway; CTP from cytidine: step 1/3. It functions in the pathway pyrimidine metabolism; UMP biosynthesis via salvage pathway; UMP from uridine: step 1/1. This chain is Uridine kinase, found in Bacillus pumilus (strain SAFR-032).